The following is a 181-amino-acid chain: MSRPAHRRPEYHKINKDLFVLTYGALVAQLCKDYEKDEDVNQYLDKMGYGIGTRLVEDFLARSCVGRCHSYSEIIDIIAQVAFKMYLGITPSVTCNNSSKNEFSLILEKNPLVEFVEELPAGRSSLCYCNLLCGIIRGALEMVHLAADVTFLQDRLKGDSVTEIGITFLKKRDEKKYRGKK.

Residue cysteine 68 is the site of S-palmitoyl cysteine attachment.

Belongs to the TRAPP small subunits family. BET3 subfamily. Homodimer. Component of the multisubunit TRAPP (transport protein particle) complex, which includes at least TRAPPC2, TRAPPC2L, TRAPPC3, TRAPPC3L, TRAPPC4, TRAPPC5, TRAPPC8, TRAPPC9, TRAPPC10, TRAPPC11 and TRAPPC12.

The protein resides in the golgi apparatus. Its subcellular location is the cis-Golgi network. It localises to the endoplasmic reticulum. May play a role in vesicular transport from endoplasmic reticulum to Golgi. The chain is Trafficking protein particle complex subunit 3-like protein (TRAPPC3L) from Homo sapiens (Human).